Reading from the N-terminus, the 314-residue chain is Putative methylthioribose-1-phosphate isomerase (314 aa).

Substrate is bound by residues 45–47, Arg-79, and Gln-177; that span reads RGA. Asp-218 serves as the catalytic Proton donor. Position 227-228 (227-228) interacts with substrate; sequence NK.

The protein belongs to the eIF-2B alpha/beta/delta subunits family. MtnA subfamily.

The catalysed reaction is 5-(methylsulfanyl)-alpha-D-ribose 1-phosphate = 5-(methylsulfanyl)-D-ribulose 1-phosphate. Functionally, catalyzes the interconversion of methylthioribose-1-phosphate (MTR-1-P) into methylthioribulose-1-phosphate (MTRu-1-P). This is Putative methylthioribose-1-phosphate isomerase from Methanosphaera stadtmanae (strain ATCC 43021 / DSM 3091 / JCM 11832 / MCB-3).